We begin with the raw amino-acid sequence, 141 residues long: Large ribosomal subunit protein uL11 (141 aa).

The protein belongs to the universal ribosomal protein uL11 family. Part of the ribosomal stalk of the 50S ribosomal subunit. Interacts with L10 and the large rRNA to form the base of the stalk. L10 forms an elongated spine to which L12 dimers bind in a sequential fashion forming a multimeric L10(L12)X complex. One or more lysine residues are methylated.

Functionally, forms part of the ribosomal stalk which helps the ribosome interact with GTP-bound translation factors. The chain is Large ribosomal subunit protein uL11 from Synechocystis sp. (strain ATCC 27184 / PCC 6803 / Kazusa).